Here is a 356-residue protein sequence, read N- to C-terminus: tRNA N6-adenosine threonylcarbamoyltransferase (356 aa).

The Fe cation site is built by H115 and H119. Substrate contacts are provided by residues 138 to 142 (LVSGG), D171, G184, and N283. D311 is a Fe cation binding site.

It belongs to the KAE1 / TsaD family. Requires Fe(2+) as cofactor.

The protein localises to the cytoplasm. The enzyme catalyses L-threonylcarbamoyladenylate + adenosine(37) in tRNA = N(6)-L-threonylcarbamoyladenosine(37) in tRNA + AMP + H(+). Its function is as follows. Required for the formation of a threonylcarbamoyl group on adenosine at position 37 (t(6)A37) in tRNAs that read codons beginning with adenine. Is involved in the transfer of the threonylcarbamoyl moiety of threonylcarbamoyl-AMP (TC-AMP) to the N6 group of A37, together with TsaE and TsaB. TsaD likely plays a direct catalytic role in this reaction. This is tRNA N6-adenosine threonylcarbamoyltransferase from Prochlorococcus marinus (strain AS9601).